Here is a 382-residue protein sequence, read N- to C-terminus: MKLKRQKPKEKFSYDPQKVLKKLEDLAWKILEEVKSGKNPYFDVPTRGLNNVYFDEEARLIKLGDKLSRRYFLNVAHARKFTQTLILMAYIKRLVSEGKHASLREAYYANKHTIPGTRENTFEDQSESDPIIEDLERMLGVLREEMHITADRRGYIYGDIVIKDGEDEFNASKLGTGGWAVPGTVEHIQFPEVNVDYVLVVETAAMADRLIEEKYPKKENCLIVATQGQASRGVRRLIHRLHYEEGLPIIVFTDGDPYGWYIYSTIKQGSINLAYLSEKLATPDAKFVGMTMDDIKEYNLEHVTEKLKGIPPDKKGGPTGDYKRLIEELNYPWFQNKEWQRQLKLALKWGVRIEQQALANKSLEFVAKEYLPEKIREGKLLP.

The 142-residue stretch at 14–155 (YDPQKVLKKL…MHITADRRGY (142 aa)) folds into the Topo IIA-type catalytic domain. Residue Tyr-108 is the O-(5'-phospho-DNA)-tyrosine intermediate of the active site. Mg(2+) is bound by residues Glu-202 and Asp-254.

It belongs to the TOP6A family. In terms of assembly, homodimer. Heterotetramer of two Top6A and two Top6B chains. It depends on Mg(2+) as a cofactor.

The enzyme catalyses ATP-dependent breakage, passage and rejoining of double-stranded DNA.. Relaxes both positive and negative superturns and exhibits a strong decatenase activity. The chain is Type 2 DNA topoisomerase 6 subunit A from Pyrococcus abyssi (strain GE5 / Orsay).